A 65-amino-acid chain; its full sequence is Protein translocase subunit SecE (65 aa).

The helical transmembrane segment at 44 to 64 (LVMAVVGLIAYIVQLTTSLII) threads the bilayer.

It belongs to the SecE/SEC61-gamma family. As to quaternary structure, component of the Sec protein translocase complex. Heterotrimer consisting of SecY (alpha), SecG (beta) and SecE (gamma) subunits. The heterotrimers can form oligomers, although 1 heterotrimer is thought to be able to translocate proteins. Interacts with the ribosome. May interact with SecDF, and other proteins may be involved.

The protein resides in the cell membrane. Functionally, essential subunit of the Sec protein translocation channel SecYEG. Clamps together the 2 halves of SecY. May contact the channel plug during translocation. The protein is Protein translocase subunit SecE of Sulfolobus acidocaldarius (strain ATCC 33909 / DSM 639 / JCM 8929 / NBRC 15157 / NCIMB 11770).